The following is a 64-amino-acid chain: Large ribosomal subunit protein uL29 (64 aa).

It belongs to the universal ribosomal protein uL29 family.

This is Large ribosomal subunit protein uL29 from Dichelobacter nodosus (strain VCS1703A).